Consider the following 864-residue polypeptide: Leucine--tRNA ligase (864 aa).

Positions 42–52 (PYPSGKLHMGH) match the 'HIGH' region motif. A 'KMSKS' region motif is present at residues 624-628 (KMSKS). Lys-627 is a binding site for ATP.

It belongs to the class-I aminoacyl-tRNA synthetase family.

The protein localises to the cytoplasm. The catalysed reaction is tRNA(Leu) + L-leucine + ATP = L-leucyl-tRNA(Leu) + AMP + diphosphate. This Burkholderia mallei (strain ATCC 23344) protein is Leucine--tRNA ligase.